We begin with the raw amino-acid sequence, 499 residues long: Cytochrome P450 11B1, mitochondrial (499 aa).

Residues 1 to 24 (MALRVTADVWLARPWQCLHRTRAL) constitute a mitochondrion transit peptide. Cys-446 is a heme binding site.

This sequence belongs to the cytochrome P450 family. Requires heme as cofactor. Adrenal zona fasciculata/reticularis.

Its subcellular location is the mitochondrion inner membrane. It catalyses the reaction a steroid + 2 reduced [adrenodoxin] + O2 + 2 H(+) = an 11beta-hydroxysteroid + 2 oxidized [adrenodoxin] + H2O. It carries out the reaction 21-hydroxyprogesterone + 2 reduced [adrenodoxin] + O2 + 2 H(+) = corticosterone + 2 oxidized [adrenodoxin] + H2O. The enzyme catalyses 21-hydroxyprogesterone + 2 reduced [adrenodoxin] + O2 + 2 H(+) = 18-hydroxy-11-deoxycorticosterone + 2 oxidized [adrenodoxin] + H2O. The catalysed reaction is 21-hydroxyprogesterone + 2 reduced [adrenodoxin] + O2 + 2 H(+) = 19-hydroxy-11-deoxycorticosterone + 2 oxidized [adrenodoxin] + H2O. It catalyses the reaction 11-deoxycortisol + 2 reduced [adrenodoxin] + O2 + 2 H(+) = cortisol + 2 oxidized [adrenodoxin] + H2O. It carries out the reaction cortisol + 2 reduced [adrenodoxin] + O2 + 2 H(+) = 18-hydroxycortisol + 2 oxidized [adrenodoxin] + H2O. The enzyme catalyses 11-deoxycortisol + 2 reduced [adrenodoxin] + O2 + 2 H(+) = 18-hydroxy-11-deoxycortisol + 2 oxidized [adrenodoxin] + H2O. It functions in the pathway steroid biosynthesis; glucocorticoid biosynthesis. It participates in steroid hormone biosynthesis. Its function is as follows. A cytochrome P450 monooxygenase involved in the biosynthesis of adrenal corticoids. Catalyzes a variety of reactions that are essential for many species, including detoxification, defense, and the formation of endogenous chemicals like steroid hormones. Steroid 11beta, 18- and 19-hydroxylase with preferred regioselectivity at 11beta, then 18, and lastly 19. Catalyzes the hydroxylation of 11-deoxycortisol and 11-deoxycorticosterone (21-hydroxyprogesterone) at 11beta position, yielding cortisol or corticosterone, respectively, but cannot produce aldosterone. Mechanistically, uses molecular oxygen inserting one oxygen atom into a substrate for hydroxylation and reducing the second into a water molecule. Two electrons are provided by NADPH via a two-protein mitochondrial transfer system comprising flavoprotein FDXR (adrenodoxin/ferredoxin reductase) and nonheme iron-sulfur protein FDX1 or FDX2 (adrenodoxin/ferredoxin). Due to its lack of 18-oxidation activity, it is incapable of generating aldosterone. Could also be involved in the androgen metabolic pathway. This Rattus norvegicus (Rat) protein is Cytochrome P450 11B1, mitochondrial (Cyp11b1).